The primary structure comprises 181 residues: Large ribosomal subunit protein uL6 (181 aa).

This sequence belongs to the universal ribosomal protein uL6 family. In terms of assembly, part of the 50S ribosomal subunit.

This protein binds to the 23S rRNA, and is important in its secondary structure. It is located near the subunit interface in the base of the L7/L12 stalk, and near the tRNA binding site of the peptidyltransferase center. The protein is Large ribosomal subunit protein uL6 of Saccharolobus solfataricus (strain ATCC 35092 / DSM 1617 / JCM 11322 / P2) (Sulfolobus solfataricus).